Consider the following 299-residue polypeptide: Oxygen-dependent coproporphyrinogen-III oxidase (299 aa).

Serine 92 contacts substrate. The a divalent metal cation site is built by histidine 96 and histidine 106. Catalysis depends on histidine 106, which acts as the Proton donor. Residue 108–110 coordinates substrate; sequence NVR. 2 residues coordinate a divalent metal cation: histidine 145 and histidine 175. The important for dimerization stretch occupies residues 240 to 275; that stretch reads YVEFNLVWDRGTLFGLQTGGRTESILMSMPPLVRWE. Residue 258–260 coordinates substrate; the sequence is GGR.

It belongs to the aerobic coproporphyrinogen-III oxidase family. Homodimer. A divalent metal cation is required as a cofactor.

Its subcellular location is the cytoplasm. The enzyme catalyses coproporphyrinogen III + O2 + 2 H(+) = protoporphyrinogen IX + 2 CO2 + 2 H2O. It functions in the pathway porphyrin-containing compound metabolism; protoporphyrin-IX biosynthesis; protoporphyrinogen-IX from coproporphyrinogen-III (O2 route): step 1/1. Its function is as follows. Involved in the heme biosynthesis. Catalyzes the aerobic oxidative decarboxylation of propionate groups of rings A and B of coproporphyrinogen-III to yield the vinyl groups in protoporphyrinogen-IX. The polypeptide is Oxygen-dependent coproporphyrinogen-III oxidase (Salmonella heidelberg (strain SL476)).